Consider the following 68-residue polypeptide: Antimicrobial peptide VpCT3 (68 aa).

The signal sequence occupies residues 1–23; the sequence is MKTQIVILIVAVLVLQLVSQSDA. Position 36 is a leucine amide (Leu-36). A propeptide spanning residues 37–68 is cleaved from the precursor; sequence GKRGLKNLDQYNDLFDGEISDADIKFLQDLMR.

This sequence belongs to the non-disulfide-bridged peptide (NDBP) superfamily. Short antimicrobial peptide (group 4) family. In terms of tissue distribution, expressed by the venom gland.

The protein resides in the secreted. The protein localises to the target cell membrane. Its function is as follows. Antimicrobial peptide with weak activity against all bacteria tested (MIC&gt;100 uM) and all yeasts tested (MIC&gt;200 uM). Also provokes weak hemolysis on human erythrocytes (HC(50)=83.7 uM). This is Antimicrobial peptide VpCT3 from Mesomexovis punctatus (Scorpion).